A 248-amino-acid polypeptide reads, in one-letter code: Cobalt transport protein CbiM (248 aa).

The signal sequence occupies residues methionine 1 to alanine 31. The next 6 membrane-spanning stretches (helical) occupy residues leucine 39 to leucine 59, valine 75 to valine 95, leucine 107 to phenylalanine 127, threonine 139 to tryptophan 159, leucine 173 to valine 195, and isoleucine 213 to tyrosine 233.

It belongs to the CbiM family. Forms an energy-coupling factor (ECF) transporter complex composed of an ATP-binding protein (A component, CbiO), a transmembrane protein (T component, CbiQ) and 2 possible substrate-capture proteins (S components, CbiM and CbiN) of unknown stoichimetry.

It localises to the cell membrane. The protein operates within cofactor biosynthesis; adenosylcobalamin biosynthesis. In terms of biological role, part of the energy-coupling factor (ECF) transporter complex CbiMNOQ involved in cobalt import. This Limosilactobacillus reuteri (strain DSM 20016) (Lactobacillus reuteri) protein is Cobalt transport protein CbiM.